A 208-amino-acid polypeptide reads, in one-letter code: Na(+)-translocating NADH-quinone reductase subunit D (208 aa).

A run of 5 helical transmembrane segments spans residues 42-62 (IVMGISVALVTGFSSFFISLV), 72-92 (IIVQMAIIASLVTLVDQLLQA), 103-123 (VFVGLIITNCIVMGRAEAFAM), 131-151 (LIDGIGNGAGYGIMLLVVATV), and 178-198 (NGLFLLAPSAFFIIGFLIWGL).

The protein belongs to the NqrDE/RnfAE family. Composed of six subunits; NqrA, NqrB, NqrC, NqrD, NqrE and NqrF.

It is found in the cell inner membrane. The catalysed reaction is a ubiquinone + n Na(+)(in) + NADH + H(+) = a ubiquinol + n Na(+)(out) + NAD(+). In terms of biological role, NQR complex catalyzes the reduction of ubiquinone-1 to ubiquinol by two successive reactions, coupled with the transport of Na(+) ions from the cytoplasm to the periplasm. NqrA to NqrE are probably involved in the second step, the conversion of ubisemiquinone to ubiquinol. The polypeptide is Na(+)-translocating NADH-quinone reductase subunit D (Neisseria meningitidis serogroup B (strain ATCC BAA-335 / MC58)).